Here is a 492-residue protein sequence, read N- to C-terminus: Mitochondrial distribution and morphology protein 12 (492 aa).

One can recognise an SMP-LTD domain in the interval 1-492 (MSIDLNWETV…VYPSFWTFLV (492 aa)). Disordered stretches follow at residues 68-158 (DFYE…STPG), 199-301 (LEGH…GHPR), and 379-434 (AVGG…GSGN). Over residues 78 to 90 (VASDDSEGEEDAV) the composition is skewed to acidic residues. The segment covering 130–139 (SPGGPGGPGM) has biased composition (gly residues). Over residues 246–257 (LNPNSLAPPSSS) the composition is skewed to low complexity. Residues 270-285 (TTPAPGSATALSGSNE) are compositionally biased toward polar residues. A compositionally biased stretch (low complexity) spans 387–400 (GLSSPGEGPSQAQG). The segment covering 401–415 (QGQGQGQGQGQGQTP) has biased composition (gly residues). Over residues 416–428 (GAGQQKQQKKQAG) the composition is skewed to low complexity.

This sequence belongs to the MDM12 family. Component of the ER-mitochondria encounter structure (ERMES) or MDM complex, composed of MMM1, MDM10, MDM12 and MDM34. An MMM1 homodimer associates with one molecule of MDM12 on each side in a pairwise head-to-tail manner, and the SMP-LTD domains of MMM1 and MDM12 generate a continuous hydrophobic tunnel for phospholipid trafficking.

Its subcellular location is the mitochondrion outer membrane. The protein resides in the endoplasmic reticulum membrane. In terms of biological role, component of the ERMES/MDM complex, which serves as a molecular tether to connect the endoplasmic reticulum (ER) and mitochondria. Components of this complex are involved in the control of mitochondrial shape and protein biogenesis, and function in nonvesicular lipid trafficking between the ER and mitochondria. MDM12 is required for the interaction of the ER-resident membrane protein MMM1 and the outer mitochondrial membrane-resident beta-barrel protein MDM10. The MDM12-MMM1 subcomplex functions in the major beta-barrel assembly pathway that is responsible for biogenesis of all mitochondrial outer membrane beta-barrel proteins, and acts in a late step after the SAM complex. The MDM10-MDM12-MMM1 subcomplex further acts in the TOM40-specific pathway after the action of the MDM12-MMM1 complex. Essential for establishing and maintaining the structure of mitochondria and maintenance of mtDNA nucleoids. This Chaetomium globosum (strain ATCC 6205 / CBS 148.51 / DSM 1962 / NBRC 6347 / NRRL 1970) (Soil fungus) protein is Mitochondrial distribution and morphology protein 12.